The sequence spans 629 residues: Flap endonuclease GEN-like 1 (629 aa).

The interval 1 to 87 (MGVGGSFWDL…DGQPSPLKSQ (87 aa)) is N-domain. The XPG-N domain stretch occupies residues 2–98 (GVGGSFWDLL…RAARFFRGSG (97 aa)). Residues D31, D78, E148, E150, D169, D171, and D221 each contribute to the Mg(2+) site. Positions 136-221 (EYLGMPVLRA…VAMALLVGSD (86 aa)) are XPG-I domain. The tract at residues 136–225 (EYLGMPVLRA…LLVGSDHDLH (90 aa)) is I-domain. The tract at residues 221 to 421 (DHDLHGVPGF…MLPMLSTIYL (201 aa)) is 5'-3' exonuclease domain. A disordered region spans residues 594 to 617 (KKGLSGDSGKDGSRKSSDVDLSKN). Basic and acidic residues predominate over residues 601-614 (SGKDGSRKSSDVDL).

This sequence belongs to the XPG/RAD2 endonuclease family. GEN subfamily. In terms of assembly, monomer. Interacts with PCNA. PCNA stimulates the nuclease activity without altering cleavage specificity. Mg(2+) serves as cofactor. In terms of tissue distribution, highly expressed in anthers. Expressed in roots and leaves.

The protein resides in the nucleus. In terms of biological role, endonuclease which cleaves flap structures at the junction between single-stranded DNA and double-stranded DNA. Possesses both single-stranded and double-stranded DNA-binding activities. Involved in early microspore development, but does not alter meiosis or tapetal cells development. Possesses Holliday junction (HJ) resolvase activity in vitro. Cleaves HJ at symmetrically related sites of the branch point. The protein is Flap endonuclease GEN-like 1 of Oryza sativa subsp. japonica (Rice).